The chain runs to 186 residues: Peptidyl-tRNA hydrolase (186 aa).

Tyr-14 provides a ligand contact to tRNA. His-19 serves as the catalytic Proton acceptor. Residues Phe-64, Asn-66, and Asn-112 each contribute to the tRNA site.

It belongs to the PTH family. In terms of assembly, monomer.

The protein resides in the cytoplasm. The catalysed reaction is an N-acyl-L-alpha-aminoacyl-tRNA + H2O = an N-acyl-L-amino acid + a tRNA + H(+). Its function is as follows. Hydrolyzes ribosome-free peptidyl-tRNAs (with 1 or more amino acids incorporated), which drop off the ribosome during protein synthesis, or as a result of ribosome stalling. Functionally, catalyzes the release of premature peptidyl moieties from peptidyl-tRNA molecules trapped in stalled 50S ribosomal subunits, and thus maintains levels of free tRNAs and 50S ribosomes. The protein is Peptidyl-tRNA hydrolase of Listeria monocytogenes serovar 1/2a (strain ATCC BAA-679 / EGD-e).